A 240-amino-acid polypeptide reads, in one-letter code: MGKTQPLPILITGGGRRIGLALAWHFINQKQPVIVSYRTHYPAIDGLINAGAQCIQADFSTNDGVMAFADEVLKTTHGLRAILHNASAWIAEKPGAPLADVLACMMQIHVNTPYLLNHALERLLRGHGHAASDIIHFTDYVVERGSDKHVAYAASKAALDNMTRSFARKLAPEVKVNSIAPSLILFNEHDDAEYRQQALNKSLMKTAPGEKEVIDLVDYLLTSCFVTGRSFPLDGGRHLR.

Tyr-152 (proton acceptor) is an active-site residue.

The protein belongs to the short-chain dehydrogenases/reductases (SDR) family. FolM subfamily.

It catalyses the reaction (6S)-5,6,7,8-tetrahydrofolate + NADP(+) = 7,8-dihydrofolate + NADPH + H(+). The enzyme catalyses 7,8-dihydromonapterin + NADPH + H(+) = 5,6,7,8-tetrahydromonapterin + NADP(+). Catalyzes the reduction of dihydromonapterin to tetrahydromonapterin. Also has lower activity with dihydrofolate. This is Dihydromonapterin reductase (folM) from Shigella flexneri serotype 5b (strain 8401).